The chain runs to 310 residues: Bacteriochlorophyll synthase 34 kDa chain (310 aa).

Over residues 1 to 13 (MSDMSDQTRLSSP) the composition is skewed to polar residues. The segment at 1–20 (MSDMSDQTRLSSPPSLPLHK) is disordered. 8 consecutive transmembrane segments (helical) span residues 39–59 (VTWFAPTWAFMCGAIASGALG), 67–87 (LLLGMFMAGPILCGLSQVVND), 112–132 (HVYILTAVLTWIGASIALFLG), 134–154 (QVAFFVALGLVFALAYSLRPI), 166–186 (LVAISYEGLAWMAGHAAFAPL), 187–207 (TGESVTIALLYSLGAHGIMTV), 248–268 (VIGLLFHWGHPVAATVVAILL), and 287–307 (VFFNATAIMLYVWGMLAAAIG).

It localises to the cell membrane. The protein operates within porphyrin-containing compound metabolism; bacteriochlorophyll biosynthesis (light-independent). Functionally, catalyzes the esterification of bacteriochlorophyllide a by geranylgeraniol-PPi. This is Bacteriochlorophyll synthase 34 kDa chain (bchG) from Chloroflexus aurantiacus (strain ATCC 29366 / DSM 635 / J-10-fl).